The primary structure comprises 249 residues: Coproheme decarboxylase (249 aa).

Fe-coproporphyrin III contacts are provided by residues R131, 145–149 (YPMDK), H172, and Q185. Y145 is a catalytic residue.

Belongs to the ChdC family. Type 1 subfamily. Fe-coproporphyrin III serves as cofactor.

The enzyme catalyses Fe-coproporphyrin III + 2 H2O2 + 2 H(+) = heme b + 2 CO2 + 4 H2O. The catalysed reaction is Fe-coproporphyrin III + H2O2 + H(+) = harderoheme III + CO2 + 2 H2O. It carries out the reaction harderoheme III + H2O2 + H(+) = heme b + CO2 + 2 H2O. It participates in porphyrin-containing compound metabolism; protoheme biosynthesis. Involved in coproporphyrin-dependent heme b biosynthesis. Catalyzes the decarboxylation of Fe-coproporphyrin III (coproheme) to heme b (protoheme IX), the last step of the pathway. The reaction occurs in a stepwise manner with a three-propionate intermediate. This is Coproheme decarboxylase from Staphylococcus haemolyticus (strain JCSC1435).